Here is a 508-residue protein sequence, read N- to C-terminus: Purine-cytosine permease fcyB (508 aa).

Residues 1–72 lie on the Cytoplasmic side of the membrane; sequence MAGAFDFDLE…AEQTDTSVFN (72 aa). The chain crosses the membrane as a helical span at residues 73–93; the sequence is IGSMWLAANMVVSSFAIGVLG. Topologically, residues 94 to 104 are extracellular; that stretch reads KSVYSLGFVDA. The chain crosses the membrane as a helical span at residues 105–125; sequence ILTVLFFNLLGIMTVCFFSCF. Over 126–147 the chain is Cytoplasmic; it reads GPFGLRQMVFSRLWFGWYVTKG. A helical transmembrane segment spans residues 148-168; that stretch reads FAVLNILACLGWSAANAIVGA. The Extracellular portion of the chain corresponds to 169 to 177; that stretch reads QMLHAVNSD. The helical transmembrane segment at 178–198 threads the bilayer; it reads VPGFAAILIISICTLLVTFAG. The Cytoplasmic portion of the chain corresponds to 199–200; that stretch reads YK. The helical transmembrane segment at 201–221 threads the bilayer; that stretch reads VVHLYEYWSWIPTFIVFMIIL. At 222 to 243 the chain is on the extracellular side; it reads GTFAHSGDFQNIPMGVGTSEMG. A helical membrane pass occupies residues 244–264; that stretch reads SVLSFGSAVYGFATGWTSYAA. Residues 265–278 are Cytoplasmic-facing; sequence DYTVYQPANRSKRK. A helical membrane pass occupies residues 279–299; that stretch reads IFLSTWLGLIVPLLFVEMLGV. Residues 300–323 are Extracellular-facing; sequence AVMTATDIKGSKYDVGYATSGNGG. Residues 324–344 traverse the membrane as a helical segment; sequence LIAAVLQPLGGFGDFCLVILA. At 345-374 the chain is on the cytoplasmic side; sequence LSIVANNCPNFYSVALTVQVLSRYAQRVPR. A helical membrane pass occupies residues 375–395; it reads FIWTLFGTGVSIAIAIPGYSH. The Extracellular segment spans residues 396–404; that stretch reads FETVLENFM. The chain crosses the membrane as a helical span at residues 405–425; the sequence is NFIAYWLAIYSAIAIMDHFVF. At 426-442 the chain is on the cytoplasmic side; the sequence is KRGFSGYVVENFDKREK. The chain crosses the membrane as a helical span at residues 443–463; sequence LPVGIAATIAFGFGVAGMITG. The Extracellular portion of the chain corresponds to 464–477; that stretch reads MSQPWYVGPIARHA. The helical transmembrane segment at 478–498 threads the bilayer; it reads AGGDVGFELGFAFAAFSYLCL. The Cytoplasmic segment spans residues 499–508; it reads RPFEIKFFGR.

The protein belongs to the purine-cytosine permease (2.A.39) family.

It localises to the cell membrane. In terms of biological role, this permease has a broad specificity towards purines, and also transports cytosine, but neither uracil nor thymine. Contributes very little in purine uptake. Its major role may be the uptake of cytosine. This Emericella nidulans (strain FGSC A4 / ATCC 38163 / CBS 112.46 / NRRL 194 / M139) (Aspergillus nidulans) protein is Purine-cytosine permease fcyB (fcyB).